Consider the following 37-residue polypeptide: Cytochrome b6-f complex subunit 5 (37 aa).

A helical membrane pass occupies residues 5-25 (LLSGIVLGLIPITLLGLFVTA).

Belongs to the PetG family. As to quaternary structure, the 4 large subunits of the cytochrome b6-f complex are cytochrome b6, subunit IV (17 kDa polypeptide, PetD), cytochrome f and the Rieske protein, while the 4 small subunits are PetG, PetL, PetM and PetN. The complex functions as a dimer.

The protein localises to the plastid. The protein resides in the chloroplast thylakoid membrane. Component of the cytochrome b6-f complex, which mediates electron transfer between photosystem II (PSII) and photosystem I (PSI), cyclic electron flow around PSI, and state transitions. PetG is required for either the stability or assembly of the cytochrome b6-f complex. The chain is Cytochrome b6-f complex subunit 5 from Marchantia polymorpha (Common liverwort).